We begin with the raw amino-acid sequence, 590 residues long: MERGPQMANRIEGKAVDKTSIKHFIKLIRAAKPRYLFFIIGILAGIVGTLIQLQVPKMVQPLVNSFGHGVNGGKVALVIALYIGSAAVSAIAAIVLGIFGESVVKNLRTRVWDKMIHLPVKYFDEVKTGEMSSRLANDTTQVKNLIANSIPQAFTSILLLVGSIVFMLQMQWRLTLAMIIAVPVVMLIMFPIMTFGQKIGRTRQDSLANFQGIASESLSEIRLVKSSNAEKQASKKAENDVNALYKIGVKEAIFDGLMSPVMMLSMMLMIFGLLAYGIYLISTGVMSLGTLLGMMMYLMNLIGAVPTVATFFTELAKASGSTGRLTELLDEEQEVLHQGESLDLEGKTLSARHVDFAYDDSEQILRDISFEAQPNSIIAFAGPSGGGKSTIFSLLERFYQPTAGEITIDGQPIDNISLENWRSQIGFVSQDSAIMAGTIRENLTYGLEGDYTDEDLWQVLDLAFARSFVENMPDQLNTEVGERGVKISGGQRQRLAIARAFLRNPKILMLDEATASLDSESESMVQKALDSLMKGRTTLVIAHRLSTIVDADKIYFIEKGQITGSGKHNELVATHPLYAKYVSEQLTVGQ.

The next 6 membrane-spanning stretches (helical) occupy residues 35 to 55, 79 to 99, 150 to 170, 176 to 196, 261 to 281, and 292 to 312; these read YLFF…QLQV, IALY…LGIF, IPQA…MLQM, LAMI…MTFG, VMML…IYLI, and LGMM…ATFF. The 280-residue stretch at 38–317 folds into the ABC transmembrane type-1 domain; sequence FIIGILAGIV…VATFFTELAK (280 aa). One can recognise an ABC transporter domain in the interval 349–584; the sequence is LSARHVDFAY…HPLYAKYVSE (236 aa). 382–389 contacts ATP; the sequence is GPSGGGKS.

The protein belongs to the ABC transporter superfamily. Multidrug exporter LmrA (TC 3.A.1.117.1) family. Homodimer.

It localises to the cell membrane. The catalysed reaction is ATP + H2O + xenobioticSide 1 = ADP + phosphate + xenobioticSide 2.. In terms of biological role, efflux transporter for a variety of amphiphilic cationic compounds, including antibiotics. This Lactococcus lactis subsp. lactis (strain IL1403) (Streptococcus lactis) protein is Multidrug resistance ABC transporter ATP-binding and permease protein (lmrA).